We begin with the raw amino-acid sequence, 206 residues long: Large ribosomal subunit protein uL4 (206 aa).

The tract at residues 46–77 is disordered; sequence GTRAQKDREQVKHSTKKPFKQKGTGNARAGMT.

It belongs to the universal ribosomal protein uL4 family. In terms of assembly, part of the 50S ribosomal subunit.

Its function is as follows. One of the primary rRNA binding proteins, this protein initially binds near the 5'-end of the 23S rRNA. It is important during the early stages of 50S assembly. It makes multiple contacts with different domains of the 23S rRNA in the assembled 50S subunit and ribosome. Forms part of the polypeptide exit tunnel. This is Large ribosomal subunit protein uL4 from Acidovorax ebreus (strain TPSY) (Diaphorobacter sp. (strain TPSY)).